We begin with the raw amino-acid sequence, 135 residues long: MSVSPVRCEPVVDVEEPVEAEVLVSSQRLSFLGGVDPKTGEVVDPSHELCGEKLTGRVLVLPGGRGSTVGSYVLMEMADRGTAPAGIVVREAEPILVVGCVLGDIPLFHRPERDLVEELSTGDVVKLLPGGKVEV.

Serine 67 functions as the Proton acceptor in the catalytic mechanism.

It belongs to the AcnX type II small subunit family. In terms of assembly, heterodimer composed of a large subunit (PMDh-L) and a small subunit (PMDh-S).

It carries out the reaction (R)-5-phosphomevalonate = (2E)-3-methyl-5-phosphooxypent-2-enoate + H2O. It functions in the pathway isoprenoid biosynthesis; isopentenyl diphosphate biosynthesis via mevalonate pathway. Its function is as follows. Component of a hydro-lyase that catalyzes the dehydration of mevalonate 5-phosphate (MVA5P) to form trans-anhydromevalonate 5-phosphate (tAHMP). Involved in the archaeal mevalonate (MVA) pathway, which provides fundamental precursors for isoprenoid biosynthesis, such as isopentenyl diphosphate (IPP) and dimethylallyl diphosphate (DMAPP). The chain is Phosphomevalonate dehydratase small subunit from Methanopyrus kandleri (strain AV19 / DSM 6324 / JCM 9639 / NBRC 100938).